The following is a 300-amino-acid chain: Protoheme IX farnesyltransferase (300 aa).

The next 9 membrane-spanning stretches (helical) occupy residues 24–44 (VTQL…PGMV), 48–68 (VLLG…AINC), 94–114 (LQIL…LYTF), 118–138 (LTIW…TLLL), 146–166 (IVIG…AVTG), 172–192 (AWIL…VLAL), 217–237 (LHIL…FISG), 239–259 (SGAV…AYAW), and 278–298 (IVYL…RPVI).

This sequence belongs to the UbiA prenyltransferase family. Protoheme IX farnesyltransferase subfamily.

The protein localises to the cell inner membrane. The enzyme catalyses heme b + (2E,6E)-farnesyl diphosphate + H2O = Fe(II)-heme o + diphosphate. It functions in the pathway porphyrin-containing compound metabolism; heme O biosynthesis; heme O from protoheme: step 1/1. Its function is as follows. Converts heme B (protoheme IX) to heme O by substitution of the vinyl group on carbon 2 of heme B porphyrin ring with a hydroxyethyl farnesyl side group. The chain is Protoheme IX farnesyltransferase from Burkholderia mallei (strain NCTC 10247).